A 711-amino-acid polypeptide reads, in one-letter code: Dendrin (711 aa).

4 disordered regions span residues 1 to 22, 49 to 273, 324 to 446, and 479 to 677; these read MLDGPLFSEGPDSPRELQDEES, APSR…KKRL, DLNS…SQGL, and PSGV…AELS. The segment covering 75–84 has biased composition (pro residues); it reads PGSPQPPPRR. Residues 102 to 134 adopt a coiled-coil conformation; that stretch reads LAEVRAREQEKRKAASQEREAKETERKRRKAGG. A compositionally biased stretch (basic and acidic residues) spans 105–127; it reads VRAREQEKRKAASQEREAKETER. Residues 113–131 are nuclear localization; sequence RKAASQEREAKETERKRRK. A compositionally biased stretch (low complexity) spans 150 to 161; sequence APRVAQLAGLPA. Residues 186–236 are interaction with MAGI2; that stretch reads GSAWAGPWGGRRPGPPSYEAHLLLRGSAGTAPRRRWDRPPPYVAPPSYEGP. Composition is skewed to low complexity over residues 252 to 262 and 346 to 356; these read PTSSAPAATPA and APAGSATAAPC. An interaction with ACTN1 region spans residues 341-436; the sequence is AGTEIAPAGS…LEGWKATRRA (96 aa). S389 carries the post-translational modification Phosphoserine. An interaction with CD2AP and NPHS1 region spans residues 408 to 709; the sequence is GGTGWRESLG…IRGTQQGNRK (302 aa). Basic and acidic residues predominate over residues 529–546; that stretch reads GEAEGGRPGDSTLEERTF.

As to quaternary structure, forms a ternary complex with MAGI2 and SH3KBP1; recruits DDN to the cytoplasm. Interacts with MAGI1. Interacts with ACTN1 and may interact with WWC1. Interacts with the podocyte slit diaphragm proteins CD2AP, NPHS1 and NPHS2; the interaction with CD2AP and NPHS1 is direct. Specifically expressed in brain and kidney. Expressed in kidney glomerular capillary loops (at protein level).

The protein localises to the cell projection. It localises to the dendritic spine membrane. The protein resides in the cytoplasm. It is found in the endoplasmic reticulum membrane. Its subcellular location is the perikaryon. The protein localises to the nucleus. Promotes apoptosis of kidney glomerular podocytes. Podocytes are highly specialized cells essential to the ultrafiltration of blood, resulting in the extraction of urine and the retention of protein. The polypeptide is Dendrin (DDN) (Homo sapiens (Human)).